Reading from the N-terminus, the 302-residue chain is tRNA pseudouridine synthase B (302 aa).

Asp45 serves as the catalytic Nucleophile.

This sequence belongs to the pseudouridine synthase TruB family. Type 1 subfamily.

It catalyses the reaction uridine(55) in tRNA = pseudouridine(55) in tRNA. In terms of biological role, responsible for synthesis of pseudouridine from uracil-55 in the psi GC loop of transfer RNAs. The protein is tRNA pseudouridine synthase B of Francisella tularensis subsp. tularensis (strain FSC 198).